The following is a 173-amino-acid chain: MTYFVLFLSLCFVLGGLAVASNPSPYYGVVGLVLASVVGCGWLLSLGVSFVSLVLFMVYLGGMLVVFVYSVALAADPFPEAWGDWRVVGYGVSFVGVLVMGLVIGGFIGCLNFGVVTVDSVGMFSVRLDFSGVAMFYSCGVGMFLVAGWGLLLTLFVVLELVRGLSRGAIRAV.

The next 5 membrane-spanning stretches (helical) occupy residues 1–21 (MTYF…AVAS), 27–47 (YGVV…LSLG), 48–68 (VSFV…VVFV), 91–111 (GVSF…IGCL), and 139–159 (CGVG…FVVL).

It belongs to the complex I subunit 6 family.

It localises to the mitochondrion membrane. It carries out the reaction a ubiquinone + NADH + 5 H(+)(in) = a ubiquinol + NAD(+) + 4 H(+)(out). Core subunit of the mitochondrial membrane respiratory chain NADH dehydrogenase (Complex I) that is believed to belong to the minimal assembly required for catalysis. Complex I functions in the transfer of electrons from NADH to the respiratory chain. The immediate electron acceptor for the enzyme is believed to be ubiquinone. In Fratercula cirrhata (Tufted puffin), this protein is NADH-ubiquinone oxidoreductase chain 6 (MT-ND6).